A 352-amino-acid polypeptide reads, in one-letter code: UDP-N-acetylglucosamine--N-acetylmuramyl-(pentapeptide) pyrophosphoryl-undecaprenol N-acetylglucosamine transferase 2 (352 aa).

Residues 11 to 13, R164, S194, and Q289 each bind UDP-N-acetyl-alpha-D-glucosamine; that span reads SAG.

This sequence belongs to the glycosyltransferase 28 family. MurG subfamily.

The protein localises to the cell membrane. It catalyses the reaction di-trans,octa-cis-undecaprenyl diphospho-N-acetyl-alpha-D-muramoyl-L-alanyl-D-glutamyl-meso-2,6-diaminopimeloyl-D-alanyl-D-alanine + UDP-N-acetyl-alpha-D-glucosamine = di-trans,octa-cis-undecaprenyl diphospho-[N-acetyl-alpha-D-glucosaminyl-(1-&gt;4)]-N-acetyl-alpha-D-muramoyl-L-alanyl-D-glutamyl-meso-2,6-diaminopimeloyl-D-alanyl-D-alanine + UDP + H(+). It participates in cell wall biogenesis; peptidoglycan biosynthesis. Cell wall formation. Catalyzes the transfer of a GlcNAc subunit on undecaprenyl-pyrophosphoryl-MurNAc-pentapeptide (lipid intermediate I) to form undecaprenyl-pyrophosphoryl-MurNAc-(pentapeptide)GlcNAc (lipid intermediate II). This chain is UDP-N-acetylglucosamine--N-acetylmuramyl-(pentapeptide) pyrophosphoryl-undecaprenol N-acetylglucosamine transferase 2, found in Bacillus cereus (strain ATCC 14579 / DSM 31 / CCUG 7414 / JCM 2152 / NBRC 15305 / NCIMB 9373 / NCTC 2599 / NRRL B-3711).